A 219-amino-acid polypeptide reads, in one-letter code: 3,4-dihydroxy-2-butanone 4-phosphate synthase (219 aa).

D-ribulose 5-phosphate-binding positions include 37–38 (RE), D42, 150–154 (RRGHT), and E174. E38 is a Mg(2+) binding site. H153 lines the Mg(2+) pocket.

Belongs to the DHBP synthase family. As to quaternary structure, homodimer. Requires Mg(2+) as cofactor. The cofactor is Mn(2+).

The enzyme catalyses D-ribulose 5-phosphate = (2S)-2-hydroxy-3-oxobutyl phosphate + formate + H(+). Its pathway is cofactor biosynthesis; riboflavin biosynthesis; 2-hydroxy-3-oxobutyl phosphate from D-ribulose 5-phosphate: step 1/1. Its function is as follows. Catalyzes the conversion of D-ribulose 5-phosphate to formate and 3,4-dihydroxy-2-butanone 4-phosphate. In Oleidesulfovibrio alaskensis (strain ATCC BAA-1058 / DSM 17464 / G20) (Desulfovibrio alaskensis), this protein is 3,4-dihydroxy-2-butanone 4-phosphate synthase.